The following is a 320-amino-acid chain: Ferrochelatase (320 aa).

2 residues coordinate Fe cation: H194 and E275.

The protein belongs to the ferrochelatase family.

It localises to the cytoplasm. It carries out the reaction heme b + 2 H(+) = protoporphyrin IX + Fe(2+). It functions in the pathway porphyrin-containing compound metabolism; protoheme biosynthesis; protoheme from protoporphyrin-IX: step 1/1. Its function is as follows. Catalyzes the ferrous insertion into protoporphyrin IX. In Xylella fastidiosa (strain M12), this protein is Ferrochelatase.